A 305-amino-acid polypeptide reads, in one-letter code: Aspartate carbamoyltransferase catalytic subunit (305 aa).

Carbamoyl phosphate is bound by residues Arg-56 and Thr-57. Lys-85 lines the L-aspartate pocket. Positions 106, 134, and 137 each coordinate carbamoyl phosphate. Residues Arg-167 and Arg-227 each coordinate L-aspartate. Carbamoyl phosphate contacts are provided by Leu-266 and Pro-267.

This sequence belongs to the aspartate/ornithine carbamoyltransferase superfamily. ATCase family. In terms of assembly, heterooligomer of catalytic and regulatory chains.

It catalyses the reaction carbamoyl phosphate + L-aspartate = N-carbamoyl-L-aspartate + phosphate + H(+). The protein operates within pyrimidine metabolism; UMP biosynthesis via de novo pathway; (S)-dihydroorotate from bicarbonate: step 2/3. In terms of biological role, catalyzes the condensation of carbamoyl phosphate and aspartate to form carbamoyl aspartate and inorganic phosphate, the committed step in the de novo pyrimidine nucleotide biosynthesis pathway. This is Aspartate carbamoyltransferase catalytic subunit from Thermoplasma volcanium (strain ATCC 51530 / DSM 4299 / JCM 9571 / NBRC 15438 / GSS1).